A 79-amino-acid polypeptide reads, in one-letter code: MQSILTQETIIIALIYLSLSVLYLLVIPAVIYYYLNTRWYVASSWERGFMYFLMSFFFPGMLLLSPFLNFRPQRRTLKA.

Helical transmembrane passes span 10-30 and 48-68; these read IIIALIYLSLSVLYLLVIPAV and GFMYFLMSFFFPGMLLLSPFL.

This sequence belongs to the complex I NdhL subunit family. In terms of assembly, NDH-1 can be composed of about 15 different subunits; different subcomplexes with different compositions have been identified which probably have different functions.

The protein localises to the cellular thylakoid membrane. It catalyses the reaction a plastoquinone + NADH + (n+1) H(+)(in) = a plastoquinol + NAD(+) + n H(+)(out). The enzyme catalyses a plastoquinone + NADPH + (n+1) H(+)(in) = a plastoquinol + NADP(+) + n H(+)(out). Its function is as follows. NDH-1 shuttles electrons from an unknown electron donor, via FMN and iron-sulfur (Fe-S) centers, to quinones in the respiratory and/or the photosynthetic chain. The immediate electron acceptor for the enzyme in this species is believed to be plastoquinone. Couples the redox reaction to proton translocation, and thus conserves the redox energy in a proton gradient. Cyanobacterial NDH-1 also plays a role in inorganic carbon-concentration. This Microcystis aeruginosa (strain NIES-843 / IAM M-2473) protein is NAD(P)H-quinone oxidoreductase subunit L.